The following is a 698-amino-acid chain: MAPRGFEDEELTISLSSSHVRRPQQQQPPPPTQQQHAHQPGSRPADAPLKERIKTEQRIGAYKVLRTLGEGSFGKVKLAIHNGTGQQVALKIIARKKLISRDMAGRVEREIEYLQLLRHPHIIKLYTVIKTPNEIIMVLEYAGGELFDYIVQHGRMKEAEARRFFQQMLCAVEYCHRHKIVHRDLKPENLLLDENLNVKIADFGLSNIMTDGNFLKTSCGSPNYAAPEVIGGKLYAGPEVDVWSCGVILYVLLVGRLPFDDEHIPSLFAKIAKGTYSIPQWMPLGAANLIKKMLVVNPVHRATIEDIRADPWFTTELPVYLQLPVEEFFNTGVDPNKAIQKNDIAPNAPEKVQERLHNEVTEKISKTMGYGKNDVEEALQASEPSAIKDAYMIVRENKMMQVNQHPEALLEPEGSSPMLSMSSARSATSTTTTTAPRPYVSKVGILPSSLPAYHKDYVEREKAGSVNNSPPQVLINDELPVTRTDAEKEETSRRLRPHSRSQLRLDEANTRPQGMTPINPPKKTKPVRWQFGIRSRNSPWEALLCIHKALHKLGATYIPDEDYESRHAEERAEASGNGSFADSYDGSRGSTTSIDPMKRYRLPADPWHINVRWDTSAIKKKLQGSADTPDKRQAHEPFVALHLDIQIYEMEHGVYLVDFKCSGYETATGRLLEEKEVTSPFPFLDMAAKLIMQLAEAD.

Residues 1 to 48 (MAPRGFEDEELTISLSSSHVRRPQQQQPPPPTQQQHAHQPGSRPADAP) form a disordered region. In terms of domain architecture, Protein kinase spans 62-313 (YKVLRTLGEG…IEDIRADPWF (252 aa)). ATP-binding positions include 68-76 (LGEGSFGKV) and K91. D184 serves as the catalytic Proton acceptor. The auto-inhibitory domain (AID) stretch occupies residues 320–417 (YLQLPVEEFF…ALLEPEGSSP (98 aa)). A UBA domain is found at 360–397 (VTEKISKTMGYGKNDVEEALQASEPSAIKDAYMIVREN). 3 disordered regions span residues 410 to 435 (LEPE…TTTA), 482 to 525 (TRTD…KKTK), and 564 to 597 (ESRH…IDPM). Positions 415 to 435 (SSPMLSMSSARSATSTTTTTA) are enriched in low complexity. Basic and acidic residues-rich tracts occupy residues 484–493 (TDAEKEETSR) and 564–573 (ESRHAEERAE).

This sequence belongs to the protein kinase superfamily. CAMK Ser/Thr protein kinase family. SNF1 subfamily. Component of the AMP-activated protein kinase complex also known as the SNF1 kinase complex (Snf1c), a heterotrimeric complex composed of a catalytic subunit alpha and 2 regulatory subunits beta and gamma.

It is found in the cytoplasm. Its subcellular location is the nucleus. The enzyme catalyses L-seryl-[protein] + ATP = O-phospho-L-seryl-[protein] + ADP + H(+). The catalysed reaction is L-threonyl-[protein] + ATP = O-phospho-L-threonyl-[protein] + ADP + H(+). Its function is as follows. Catalytic subunit of the AMP-activated protein kinase complex also known as the SNF1 kinase complex (Snf1c), a central regulator of cellular energy homeostasis, which, in response to a fall in intracellular ATP levels, activates energy-producing pathways and inhibits energy-consuming processes. The complex phosphorylates histone H3 to form H3S10ph, which promotes H3K14ac formation, leading to transcriptional activation through TBP recruitment to the promoters. Activates the expression of the galactose oxidase (GOA) gene and of several cell wall-degrading enzymes (CWDEs) such as pectate lyase, xylanase and glucanase. Plays an important role in sudden death syndrome (SDS) by controlling the colonization of the infected roots. This is Sucrose non-fermenting protein kinase 1 from Fusarium virguliforme.